The following is a 399-amino-acid chain: uncharacterized protein (399 aa).

Helical transmembrane passes span 19 to 39 (IFSI…PLFV), 46 to 66 (VNLL…LLMY), 91 to 111 (FYTI…PILG), 123 to 143 (QFEQ…IIAS), 146 to 166 (IYAK…IFIA), 183 to 203 (LLSA…ISYI), 225 to 247 (VAIL…MPIW), 283 to 303 (VLLL…LLGF), 307 to 327 (FGLD…FAYL), 335 to 355 (LFSI…YLGY), and 369 to 389 (IEYT…VYLL).

The protein resides in the host membrane. Its function is as follows. Putative amino acid transporter. This is an uncharacterized protein from Saccharolobus islandicus (Sulfolobus islandicus).